The sequence spans 327 residues: DNA-directed RNA polymerase subunit alpha (327 aa).

An alpha N-terminal domain (alpha-NTD) region spans residues 1–242 (MRKFLKYQLD…AHLEPIVNID (242 aa)). The alpha C-terminal domain (alpha-CTD) stretch occupies residues 259–327 (KRQNASISID…TERSLELKKD (69 aa)).

This sequence belongs to the RNA polymerase alpha chain family. In terms of assembly, homodimer. The RNAP catalytic core consists of 2 alpha, 1 beta, 1 beta' and 1 omega subunit. When a sigma factor is associated with the core the holoenzyme is formed, which can initiate transcription.

It catalyses the reaction RNA(n) + a ribonucleoside 5'-triphosphate = RNA(n+1) + diphosphate. DNA-dependent RNA polymerase catalyzes the transcription of DNA into RNA using the four ribonucleoside triphosphates as substrates. The protein is DNA-directed RNA polymerase subunit alpha of Ureaplasma parvum serovar 3 (strain ATCC 700970).